A 345-amino-acid polypeptide reads, in one-letter code: Type II restriction enzyme HgiCI (345 aa).

It carries out the reaction Endonucleolytic cleavage of DNA to give specific double-stranded fragments with terminal 5'-phosphates.. Its function is as follows. A P subtype restriction enzyme that recognizes the double-stranded sequence 5'-GGYRCC-3' and cleaves after G-1. In Herpetosiphon aurantiacus (Herpetosiphon giganteus), this protein is Type II restriction enzyme HgiCI (hgiCIR).